We begin with the raw amino-acid sequence, 755 residues long: Protein phosphatase 1E (755 aa).

Residues 21 to 131 (EFRGPCGGGE…PPLPPLPRPL (111 aa)) form a disordered region. 7 consecutive repeat copies span residues 31–32 (PE), 33–34 (PE), 35–36 (PE), 37–38 (PE), 39–40 (PE), 41–42 (PE), and 43–44 (PE). The segment at 31–52 (PEPEPEPEPEPEPESEPEPEPE) is 11 X 2 AA tandem repeats of P-E. Composition is skewed to acidic residues over residues 31-68 (PEPE…EPGE) and 77-101 (EEGD…EEEG). An 8; approximate repeat occupies 45-46 (SE). Repeat copies occupy residues 47–48 (PE), 49–50 (PE), and 51–52 (PE). The segment covering 102–113 (AATAAAAPGHSA) has biased composition (low complexity). Over residues 114 to 129 (VPPPPPQLPPLPPLPR) the composition is skewed to pro residues. The 258-residue stretch at 231-488 (ETSIHAIKNM…DNITVIVVFL (258 aa)) folds into the PPM-type phosphatase domain. Mn(2+) contacts are provided by Asp273, Gly274, Asp435, and Asp479. The disordered stretch occupies residues 498–537 (SEESDWTENSFQGGQEDGGDDKENHGECKRPWPQHQCSAP). Over residues 518-527 (DKENHGECKR) the composition is skewed to basic and acidic residues. Residues Ser535 and Ser548 each carry the phosphoserine modification.

It belongs to the PP2C family. In terms of assembly, heterotrimer. Interacts with PAX1 and ARHGEF6 (or ARHGEF7). The cofactor is Mg(2+). Requires Mn(2+) as cofactor.

The protein localises to the nucleus. Its subcellular location is the cytoplasm. It catalyses the reaction O-phospho-L-seryl-[protein] + H2O = L-seryl-[protein] + phosphate. The enzyme catalyses O-phospho-L-threonyl-[protein] + H2O = L-threonyl-[protein] + phosphate. Functionally, protein phosphatase that inactivates multifunctional CaM kinases such as CAMK4 and CAMK2. Dephosphorylates and inactivates PAK. May play a role in the inhibition of actin fiber stress breakdown and in morphological changes driven by TNK2/CDC42. Dephosphorylates PRKAA2. This Homo sapiens (Human) protein is Protein phosphatase 1E (PPM1E).